Reading from the N-terminus, the 332-residue chain is Probable allantoicase (332 aa).

Belongs to the allantoicase family.

It catalyses the reaction allantoate + H2O = (S)-ureidoglycolate + urea. Its pathway is nitrogen metabolism; (S)-allantoin degradation; (S)-ureidoglycolate from allantoate (aminidohydrolase route): step 1/1. This Pseudomonas paraeruginosa (strain DSM 24068 / PA7) (Pseudomonas aeruginosa (strain PA7)) protein is Probable allantoicase.